The sequence spans 76 residues: UPF0291 protein Aflv_1503 (76 aa).

The segment at aspartate 56–histidine 76 is disordered.

It belongs to the UPF0291 family.

It is found in the cytoplasm. In Anoxybacillus flavithermus (strain DSM 21510 / WK1), this protein is UPF0291 protein Aflv_1503.